Reading from the N-terminus, the 179-residue chain is Crossover junction endodeoxyribonuclease RuvC (179 aa).

Residues aspartate 7 and glutamate 67 contribute to the active site. Aspartate 7 and glutamate 67 together coordinate Mn(2+). Residues 68–74 (DQILRRQ) carry the DNA-binding loop motif. Active-site residues include histidine 139 and aspartate 142. Position 139 (histidine 139) interacts with Mn(2+).

This sequence belongs to the RuvC family. In terms of assembly, homodimer which binds Holliday junction (HJ) DNA. The HJ becomes 2-fold symmetrical on binding to RuvC with unstacked arms; it has a different conformation from HJ DNA in complex with RuvA. In the full resolvosome a probable DNA-RuvA(4)-RuvB(12)-RuvC(2) complex forms which resolves the HJ. It depends on Mn(2+) as a cofactor.

The protein resides in the cytoplasm. The catalysed reaction is Endonucleolytic cleavage at a junction such as a reciprocal single-stranded crossover between two homologous DNA duplexes (Holliday junction).. Functionally, the RuvA-RuvB-RuvC complex processes Holliday junction (HJ) DNA during genetic recombination and DNA repair. Endonuclease that resolves HJ intermediates. Cleaves cruciform DNA by making single-stranded nicks across the HJ at symmetrical positions within the homologous arms, probably yielding a 5'-phosphate and a 3'-hydroxyl group; requires a central core of homology in the junction. The consensus cleavage sequence is 5'-(G/C)TC(C/G)-3' (a different site than E.coli); cleavage occurs on the 3'-side of the TC dinucleotide at the point of strand exchange. Also resolves nicked HJ intermediates, replication forks and Y-junction DNA in vitro. HJ branch migration catalyzed by RuvA-RuvB allows RuvC to scan DNA until it finds its consensus sequence, where it cleaves and resolves the cruciform DNA. In terms of biological role, binds HJ DNA independently of homologous core or consensus sequence; Mn(2+) is not essential for binding but improves it, while &gt;1.0 mM Mg(2+) inhibit binding. Also binds Y-junction DNA less well. Requires a homologous core to cleave DNA. Another study shows divalent cations (Mn(2+), Mg(2+) and Ca(2+), tested up to 5.0 mM) improve DNA binding considerably over binding in their absence. The polypeptide is Crossover junction endodeoxyribonuclease RuvC (Deinococcus radiodurans (strain ATCC 13939 / DSM 20539 / JCM 16871 / CCUG 27074 / LMG 4051 / NBRC 15346 / NCIMB 9279 / VKM B-1422 / R1)).